The sequence spans 1532 residues: Multidrug resistance-associated protein 1 (1532 aa).

Topologically, residues methionine 1 to phenylalanine 33 are extracellular. N-linked (GlcNAc...) asparagine glycosylation occurs at asparagine 19. A helical transmembrane segment spans residues glutamine 34–phenylalanine 54. At leucine 55 to lysine 74 the chain is on the cytoplasmic side. Residues threonine 75 to glutamate 95 form a helical membrane-spanning segment. Residues arginine 96 to methionine 100 are Extracellular-facing. The helical transmembrane segment at leucine 101 to threonine 121 threads the bilayer. The Cytoplasmic segment spans residues phenylalanine 122–glutamine 133. The helical transmembrane segment at serine 134–arginine 154 threads the bilayer. The Extracellular segment spans residues serine 155–aspartate 172. A helical transmembrane segment spans residues serine 173–aspartate 193. Residues serine 194 to valine 317 are Cytoplasmic-facing. Tyrosine 277 is subject to Phosphotyrosine. Residue serine 290 is modified to Phosphoserine. The helical transmembrane segment at leucine 318–leucine 338 threads the bilayer. The 284-residue stretch at phenylalanine 326–glutamine 609 folds into the ABC transmembrane type-1 1 domain. Residues methionine 339–glycine 364 lie on the Extracellular side of the membrane. Residues tyrosine 365–tyrosine 385 traverse the membrane as a helical segment. The Cytoplasmic segment spans residues phenylalanine 386–tyrosine 441. A helical transmembrane segment spans residues isoleucine 442–asparagine 462. The Extracellular segment spans residues leucine 463–proline 465. Residues serine 466–methionine 486 traverse the membrane as a helical segment. Topologically, residues lysine 487 to alanine 548 are cytoplasmic. Lysine 504 is subject to N6-succinyllysine. Residues valine 549 to phenylalanine 569 traverse the membrane as a helical segment. Residues valine 570–asparagine 591 lie on the Extracellular side of the membrane. The helical transmembrane segment at isoleucine 592–valine 612 threads the bilayer. The Cytoplasmic segment spans residues serine 613–methionine 967. One can recognise an ABC transporter 1 domain in the interval isoleucine 645–threonine 869. Glycine 679 to serine 686 serves as a coordination point for ATP. Residues serine 879, serine 883, serine 916, and serine 931 each carry the phosphoserine modification. A helical membrane pass occupies residues lysine 968–serine 988. An ABC transmembrane type-1 2 domain is found at serine 975 to threonine 1257. Over alanine 989–leucine 1026 the chain is Extracellular. A helical membrane pass occupies residues glutamine 1027–arginine 1047. The Cytoplasmic segment spans residues arginine 1048 to glutamine 1090. Residues valine 1091–leucine 1111 traverse the membrane as a helical segment. Alanine 1112 is a topological domain (extracellular). The chain crosses the membrane as a helical span at residues threonine 1113–phenylalanine 1133. At tyrosine 1134–leucine 1204 the chain is on the cytoplasmic side. The helical transmembrane segment at glutamate 1205 to serine 1225 threads the bilayer. Residues leucine 1226 to serine 1227 are Extracellular-facing. Residues alanine 1228–leucine 1248 form a helical membrane-spanning segment. Topologically, residues valine 1249–valine 1532 are cytoplasmic. Residues valine 1294–aspartate 1528 enclose the ABC transporter 2 domain. ATP is bound at residue glycine 1328–serine 1335.

It belongs to the ABC transporter superfamily. ABCC family. Conjugate transporter (TC 3.A.1.208) subfamily. In terms of processing, glycosylated. Skeletal muscle, brain, heart, spleen, lung and kidney.

It localises to the cell membrane. Its subcellular location is the basolateral cell membrane. The catalysed reaction is ATP + H2O + xenobioticSide 1 = ADP + phosphate + xenobioticSide 2.. The enzyme catalyses an S-substituted glutathione(in) + ATP + H2O = an S-substituted glutathione(out) + ADP + phosphate + H(+). It catalyses the reaction sphing-4-enine 1-phosphate(in) + ATP + H2O = sphing-4-enine 1-phosphate(out) + ADP + phosphate + H(+). It carries out the reaction leukotriene C4(in) + ATP + H2O = leukotriene C4(out) + ADP + phosphate + H(+). The catalysed reaction is 17beta-estradiol 17-O-(beta-D-glucuronate)(in) + ATP + H2O = 17beta-estradiol 17-O-(beta-D-glucuronate)(out) + ADP + phosphate + H(+). The enzyme catalyses daunorubicin(in) + ATP + H2O = daunorubicin(out) + ADP + phosphate + H(+). It catalyses the reaction vincristine(in) + ATP + H2O = vincristine(out) + ADP + phosphate + H(+). It carries out the reaction 2',3'-cGAMP(in) + ATP + H2O = 2',3'-cGAMP(out) + ADP + phosphate + H(+). The catalysed reaction is S-[(2E,6E,10E)-geranylgeranyl]-L-glutathione(in) + ATP + H2O = S-[(2E,6E,10E)-geranylgeranyl]-L-glutathione(out) + ADP + phosphate + H(+). The enzyme catalyses prostaglandin A2-S-(R)-glutathione(in) + ATP + H2O = prostaglandin A2-S-(R)-glutathione(out) + ADP + phosphate + H(+). It catalyses the reaction prostaglandin A2-S-(S)-glutathione(in) + ATP + H2O = prostaglandin A2-S-(S)-glutathione(out) + ADP + phosphate + H(+). With respect to regulation, MK 571 inhibits sphingosine 1-phosphate and leukotriene C4 export. Functionally, mediates export of organic anions and drugs from the cytoplasm. Mediates ATP-dependent transport of glutathione and glutathione conjugates, leukotriene C4, estradiol-17-beta-o-glucuronide, methotrexate, antiviral drugs and other xenobiotics. Confers resistance to anticancer drugs by decreasing accumulation of drug in cells, and by mediating ATP- and GSH-dependent drug export. Hydrolyzes ATP with low efficiency. Catalyzes the export of sphingosine 1-phosphate from mast cells independently of their degranulation. Participates in inflammatory response by allowing export of leukotriene C4 from leukotriene C4-synthesizing cells. Exports S-geranylgeranyl-glutathione (GGG) in lymphoid cells and stromal compartments of lymphoid organs. ABCC1 (via extracellular transport) with GGT5 (via GGG catabolism) establish GGG gradients within lymphoid tissues to position P2RY8-positive lymphocytes at germinal centers in lymphoid follicles and restrict their chemotactic transmigration from blood vessels to the bone marrow parenchyma. Mediates basolateral export of GSH-conjugated R- and S-prostaglandin A2 diastereomers in polarized epithelial cells. This is Multidrug resistance-associated protein 1 from Rattus norvegicus (Rat).